The sequence spans 1004 residues: 2-oxoglutarate dehydrogenase E1 component (1004 aa).

Belongs to the alpha-ketoglutarate dehydrogenase family. In terms of assembly, homodimer. Part of the 2-oxoglutarate dehydrogenase (OGDH) complex composed of E1 (2-oxoglutarate dehydrogenase), E2 (dihydrolipoamide succinyltransferase) and E3 (dihydrolipoamide dehydrogenase); the complex contains multiple copies of the three enzymatic components (E1, E2 and E3). Thiamine diphosphate is required as a cofactor.

The enzyme catalyses N(6)-[(R)-lipoyl]-L-lysyl-[protein] + 2-oxoglutarate + H(+) = N(6)-[(R)-S(8)-succinyldihydrolipoyl]-L-lysyl-[protein] + CO2. Functionally, E1 component of the 2-oxoglutarate dehydrogenase (OGDH) complex which catalyzes the decarboxylation of 2-oxoglutarate, the first step in the conversion of 2-oxoglutarate to succinyl-CoA and CO(2). The chain is 2-oxoglutarate dehydrogenase E1 component from Brucella ovis (strain ATCC 25840 / 63/290 / NCTC 10512).